A 181-amino-acid polypeptide reads, in one-letter code: ATP synthase subunit delta (181 aa).

The protein belongs to the ATPase delta chain family. In terms of assembly, F-type ATPases have 2 components, F(1) - the catalytic core - and F(0) - the membrane proton channel. F(1) has five subunits: alpha(3), beta(3), gamma(1), delta(1), epsilon(1). F(0) has three main subunits: a(1), b(2) and c(10-14). The alpha and beta chains form an alternating ring which encloses part of the gamma chain. F(1) is attached to F(0) by a central stalk formed by the gamma and epsilon chains, while a peripheral stalk is formed by the delta and b chains.

It localises to the cell inner membrane. Functionally, f(1)F(0) ATP synthase produces ATP from ADP in the presence of a proton or sodium gradient. F-type ATPases consist of two structural domains, F(1) containing the extramembraneous catalytic core and F(0) containing the membrane proton channel, linked together by a central stalk and a peripheral stalk. During catalysis, ATP synthesis in the catalytic domain of F(1) is coupled via a rotary mechanism of the central stalk subunits to proton translocation. In terms of biological role, this protein is part of the stalk that links CF(0) to CF(1). It either transmits conformational changes from CF(0) to CF(1) or is implicated in proton conduction. The polypeptide is ATP synthase subunit delta (Blochmanniella pennsylvanica (strain BPEN)).